Consider the following 895-residue polypeptide: AP-1 complex subunit gamma (895 aa).

HEAT repeat units lie at residues 130–166 (TAMARDISPEIEKVISHSNPYIRKKAALCAIRVLRKV), 167–205 (PDLTENYIPKIKALLSERNHAVILTALTLIIEICEMDST), 211–256 (KKMV…ILGQ), 301–339 (NGLKVMAINILGRFLLNRDNNIRYVALNTLSRVVNTDIQ), and 341–376 (VQRHRNTIVECLKDPDVSIRCRALDLIYSLVTESNI). Disordered regions lie at residues 591–687 (KQEE…MNNM), 706–733 (NNNSMGGMMNNNNNNNNNNNNNNNNNKS), and 746–770 (QLTPTPQQPQSQSQQALSPTNQTSV). Composition is skewed to low complexity over residues 604–626 (PTQTPPQQHYQQQQQQPQQQSSQ), 639–658 (QSSANSGNNNNNNNKQGGNA), 675–687 (NGNMNNNNNMNNM), 706–731 (NNNSMGGMMNNNNNNNNNNNNNNNNN), and 746–765 (QLTPTPQQPQSQSQQALSPT). The GAE domain occupies 775–893 (PQPLTFLVYQ…SDVPDTPLPS (119 aa)).

The protein belongs to the adaptor complexes large subunit family. Adaptor protein complex 1 (AP-1) is a heterotetramer composed of two large adaptins (gamma-type subunit and beta-type subunit), a medium adaptin (mu-type subunit) and a small adaptin (sigma-type subunit). Interacts with rhgA.

It localises to the golgi apparatus. Its subcellular location is the trans-Golgi network. The protein resides in the cytoplasmic vesicle. It is found in the clathrin-coated vesicle membrane. Subunit of clathrin-associated adaptor protein complex 1 that plays a role in protein sorting in the trans-Golgi network (TGN) and endosomes. The AP complexes mediate the recruitment of clathrin to membranes and the recognition of sorting signals within the cytosolic tails of transmembrane cargo molecules. Also involved in early steps of phagocytosis and macropinocytosis. In Dictyostelium discoideum (Social amoeba), this protein is AP-1 complex subunit gamma (ap1g1).